Consider the following 871-residue polypeptide: DNA mismatch repair protein MutS (871 aa).

616–623 is an ATP binding site; the sequence is GPNMAGKS. Residues 801–825 are disordered; that stretch reads ETEKTEESMEGTNLPKKKKEEKTSS.

This sequence belongs to the DNA mismatch repair MutS family.

Its function is as follows. This protein is involved in the repair of mismatches in DNA. It is possible that it carries out the mismatch recognition step. This protein has a weak ATPase activity. This Clostridium kluyveri (strain NBRC 12016) protein is DNA mismatch repair protein MutS.